Consider the following 188-residue polypeptide: Crossover junction endodeoxyribonuclease RuvC (188 aa).

Residues Asp-7, Glu-68, and Asp-141 contribute to the active site. Asp-7, Glu-68, and Asp-141 together coordinate Mg(2+).

This sequence belongs to the RuvC family. As to quaternary structure, homodimer which binds Holliday junction (HJ) DNA. The HJ becomes 2-fold symmetrical on binding to RuvC with unstacked arms; it has a different conformation from HJ DNA in complex with RuvA. In the full resolvosome a probable DNA-RuvA(4)-RuvB(12)-RuvC(2) complex forms which resolves the HJ. Mg(2+) serves as cofactor.

It is found in the cytoplasm. The catalysed reaction is Endonucleolytic cleavage at a junction such as a reciprocal single-stranded crossover between two homologous DNA duplexes (Holliday junction).. Its function is as follows. The RuvA-RuvB-RuvC complex processes Holliday junction (HJ) DNA during genetic recombination and DNA repair. Endonuclease that resolves HJ intermediates. Cleaves cruciform DNA by making single-stranded nicks across the HJ at symmetrical positions within the homologous arms, yielding a 5'-phosphate and a 3'-hydroxyl group; requires a central core of homology in the junction. The consensus cleavage sequence is 5'-(A/T)TT(C/G)-3'. Cleavage occurs on the 3'-side of the TT dinucleotide at the point of strand exchange. HJ branch migration catalyzed by RuvA-RuvB allows RuvC to scan DNA until it finds its consensus sequence, where it cleaves and resolves the cruciform DNA. This is Crossover junction endodeoxyribonuclease RuvC from Mycobacterium tuberculosis (strain ATCC 25177 / H37Ra).